The primary structure comprises 232 residues: Aprataxin-like protein (232 aa).

Residues 38-160 enclose the HIT domain; it reads LKVYIESPES…MTLDHVSPSL (123 aa). Interaction with DNA stretches follow at residues 63–67, 138–149, and 161–165; these read DMFPK, HAGPSMNNLHLH, and KNSAH. The Nucleophile role is filled by His-147. Cys-200 and Cys-203 together coordinate Zn(2+). An interaction with DNA region spans residues 209 to 212; the sequence is RHFT. Residues His-217 and Glu-221 each coordinate Zn(2+).

Monomer.

The protein resides in the nucleus. The protein localises to the cytoplasm. It catalyses the reaction a 5'-end adenosine-5'-diphospho-5'-2'-deoxyribonucleoside-DNA + H2O = a 5'-end 5'-phospho-2'-deoxyribonucleoside-DNA + AMP + 2 H(+). It carries out the reaction a 5'-end adenosine-5'-diphospho-5'-ribonucleoside-2'-deoxyribonucleotide-DNA + H2O = a 5'-end 5'-phospho-ribonucleoside-2'-deoxyribonucleotide-DNA + AMP + 2 H(+). The enzyme catalyses a 3'-end 2'-deoxyribonucleotide-3'-diphospho-5'-guanosine-DNA + H2O = a 3'-end 2'-deoxyribonucleotide 3'-phosphate-DNA + GMP + 2 H(+). In terms of biological role, DNA-binding protein involved in single-strand DNA break repair, double-strand DNA break repair and base excision repair. Resolves abortive DNA ligation intermediates formed either at base excision sites, or when DNA ligases attempt to repair non-ligatable breaks induced by reactive oxygen species. Catalyzes the release of adenylate groups covalently linked to 5'-phosphate termini, resulting in the production of 5'-phosphate termini that can be efficiently rejoined. Likewise, catalyzes the release of 3'-linked guanosine (DNAppG) and inosine (DNAppI) from DNA, but has higher specific activity with 5'-linked adenosine (AppDNA). The chain is Aprataxin-like protein (hnt3) from Schizosaccharomyces pombe (strain 972 / ATCC 24843) (Fission yeast).